We begin with the raw amino-acid sequence, 124 residues long: Small ribosomal subunit protein uS12 (124 aa).

Asp-89 carries the 3-methylthioaspartic acid modification. Lys-108 is modified (N6-acetyllysine).

The protein belongs to the universal ribosomal protein uS12 family. As to quaternary structure, part of the 30S ribosomal subunit. Contacts proteins S8 and S17. May interact with IF1 in the 30S initiation complex.

Functionally, with S4 and S5 plays an important role in translational accuracy. Interacts with and stabilizes bases of the 16S rRNA that are involved in tRNA selection in the A site and with the mRNA backbone. Located at the interface of the 30S and 50S subunits, it traverses the body of the 30S subunit contacting proteins on the other side and probably holding the rRNA structure together. The combined cluster of proteins S8, S12 and S17 appears to hold together the shoulder and platform of the 30S subunit. The sequence is that of Small ribosomal subunit protein uS12 from Escherichia coli O139:H28 (strain E24377A / ETEC).